The following is a 118-amino-acid chain: Large ribosomal subunit protein bL19 (118 aa).

The protein belongs to the bacterial ribosomal protein bL19 family.

Its function is as follows. This protein is located at the 30S-50S ribosomal subunit interface and may play a role in the structure and function of the aminoacyl-tRNA binding site. This is Large ribosomal subunit protein bL19 from Campylobacter jejuni subsp. jejuni serotype O:6 (strain 81116 / NCTC 11828).